Consider the following 308-residue polypeptide: Cysteine synthase (308 aa).

At K45 the chain carries N6-(pyridoxal phosphate)lysine. Pyridoxal 5'-phosphate-binding positions include N75, 179–183 (GTGGT), and S267.

It belongs to the cysteine synthase/cystathionine beta-synthase family. As to quaternary structure, homodimer. Forms CymR(2):CysK(2) or CymR(4):CysK(4) complexes in the absence of O-acetylserine. Pyridoxal 5'-phosphate serves as cofactor.

It carries out the reaction O-acetyl-L-serine + hydrogen sulfide = L-cysteine + acetate. Its pathway is amino-acid biosynthesis; L-cysteine biosynthesis; L-cysteine from L-serine: step 2/2. Its function is as follows. Catalyzes the conversion of O-acetylserine to cysteine. Also acts as a sensor of cysteine availability in the signal transduction pathway modulating CymR activity. When cysteine is present, the pool of O-acetylserine (OAS) is low, which leads to the formation of a CymR-CysK complex and transcriptional repression of the CymR regulon occurs. In the absence of cysteine, the OAS pool is high and the CymR-CysK complex is mostly dissociated, leading to a faster dissociation of CymR from its DNA targets and the lifting of CymR-dependent repression. The protein is Cysteine synthase (cysK) of Bacillus subtilis (strain 168).